Here is a 481-residue protein sequence, read N- to C-terminus: ATP synthase subunit alpha (481 aa).

145-152 (GDRQTGKT) is a binding site for ATP.

This sequence belongs to the ATPase alpha/beta chains family. In terms of assembly, F-type ATPases have 2 components, CF(1) - the catalytic core - and CF(0) - the membrane proton channel. CF(1) has five subunits: alpha(3), beta(3), gamma(1), delta(1), epsilon(1). CF(0) has three main subunits: a(1), b(2) and c(9-12). The alpha and beta chains form an alternating ring which encloses part of the gamma chain. CF(1) is attached to CF(0) by a central stalk formed by the gamma and epsilon chains, while a peripheral stalk is formed by the delta and b chains.

It is found in the cell membrane. The catalysed reaction is ATP + H2O + 4 H(+)(in) = ADP + phosphate + 5 H(+)(out). Produces ATP from ADP in the presence of a proton gradient across the membrane. The alpha chain is a regulatory subunit. This chain is ATP synthase subunit alpha, found in Carsonella ruddii (strain PV).